The primary structure comprises 205 residues: Recombination protein RecR (205 aa).

Residues 64-79 form a C4-type zinc finger; sequence CRRCFNITVDELCPIC. The region spanning 87–182 is the Toprim domain; sequence TKICVVEEPL…RVTRPARGLP (96 aa).

It belongs to the RecR family.

In terms of biological role, may play a role in DNA repair. It seems to be involved in an RecBC-independent recombinational process of DNA repair. It may act with RecF and RecO. In Chloroflexus aggregans (strain MD-66 / DSM 9485), this protein is Recombination protein RecR.